We begin with the raw amino-acid sequence, 423 residues long: Pseudouridylate synthase 1 homolog (423 aa).

The disordered stretch occupies residues 32–75 (AGNKVPPALASHQPDRKGRGGWVWEETEHPAKRVKGGEDEEPPR). Residues 57–68 (ETEHPAKRVKGG) show a composition bias toward basic and acidic residues. Aspartate 142 acts as the Nucleophile in catalysis. Residues 403–423 (ADTGAKVPSSLEGSEGDGDTD) form a disordered region. Phosphoserine occurs at positions 411 and 416. Position 422 is a phosphothreonine (threonine 422).

It belongs to the tRNA pseudouridine synthase TruA family. As to quaternary structure, monomer. Forms a complex with RARG and the SRA1 RNA in the nucleus.

Its subcellular location is the nucleus. It is found in the cytoplasm. The protein localises to the mitochondrion. The catalysed reaction is a uridine in tRNA = a pseudouridine in tRNA. It carries out the reaction uridine(38/39/40) in tRNA = pseudouridine(38/39/40) in tRNA. It catalyses the reaction a uridine in mRNA = a pseudouridine in mRNA. Its function is as follows. Pseudouridylate synthase that catalyzes pseudouridylation of tRNAs and mRNAs. Acts on positions 27/28 in the anticodon stem and also positions 34 and 36 in the anticodon of an intron containing tRNA. Also catalyzes pseudouridylation of mRNAs: mediates pseudouridylation of mRNAs with the consensus sequence 5'-UGUAG-3'. Acts as a regulator of pre-mRNA splicing by mediating pseudouridylation of pre-mRNAs at locations associated with alternatively spliced regions. Pseudouridylation of pre-mRNAs near splice sites directly regulates mRNA splicing and mRNA 3'-end processing. Involved in regulation of nuclear receptor activity through pseudouridylation of SRA1 mRNA. Does not form pseudouridine when expressed in vitro. The chain is Pseudouridylate synthase 1 homolog from Mus musculus (Mouse).